Consider the following 820-residue polypeptide: 1,4-alpha-glucan-branching enzyme, chloroplastic/amyloplastic (820 aa).

Residues 1-20 (MLCLTSSSSSAPAPLLPSLA) are compositionally biased toward low complexity. The disordered stretch occupies residues 1-28 (MLCLTSSSSSAPAPLLPSLADRPSPGIA). Residues 1–64 (MLCLTSSSSS…SVPATARKNK (64 aa)) constitute a chloroplast transit peptide. (1,4-alpha-D-glucosyl)n-binding residues include Trp153 and Lys188. Asp409 acts as the Nucleophile in catalysis. Residue Glu464 is the Proton donor of the active site.

This sequence belongs to the glycosyl hydrolase 13 family. GlgB subfamily. In terms of assembly, monomer.

The protein localises to the plastid. It is found in the chloroplast. The protein resides in the amyloplast. The enzyme catalyses Transfers a segment of a (1-&gt;4)-alpha-D-glucan chain to a primary hydroxy group in a similar glucan chain.. It participates in glycan biosynthesis; starch biosynthesis. In terms of biological role, catalyzes the formation of the alpha-1,6-glucosidic linkages in starch by scission of a 1,4-alpha-linked oligosaccharide from growing alpha-1,4-glucan chains and the subsequent attachment of the oligosaccharide to the alpha-1,6 position. This chain is 1,4-alpha-glucan-branching enzyme, chloroplastic/amyloplastic (SBE1), found in Oryza sativa subsp. japonica (Rice).